Consider the following 100-residue polypeptide: ATP synthase subunit c (100 aa).

Helical transmembrane passes span 30–50 (LLYL…GVGM) and 80–100 (AFIE…LFVV).

The protein belongs to the ATPase C chain family. In terms of assembly, F-type ATPases have 2 components, F(1) - the catalytic core - and F(0) - the membrane proton channel. F(1) has five subunits: alpha(3), beta(3), gamma(1), delta(1), epsilon(1). F(0) has three main subunits: a(1), b(2) and c(10-14). The alpha and beta chains form an alternating ring which encloses part of the gamma chain. F(1) is attached to F(0) by a central stalk formed by the gamma and epsilon chains, while a peripheral stalk is formed by the delta and b chains.

It is found in the cell inner membrane. F(1)F(0) ATP synthase produces ATP from ADP in the presence of a proton or sodium gradient. F-type ATPases consist of two structural domains, F(1) containing the extramembraneous catalytic core and F(0) containing the membrane proton channel, linked together by a central stalk and a peripheral stalk. During catalysis, ATP synthesis in the catalytic domain of F(1) is coupled via a rotary mechanism of the central stalk subunits to proton translocation. In terms of biological role, key component of the F(0) channel; it plays a direct role in translocation across the membrane. A homomeric c-ring of between 10-14 subunits forms the central stalk rotor element with the F(1) delta and epsilon subunits. This is ATP synthase subunit c from Aquifex aeolicus (strain VF5).